The following is a 186-amino-acid chain: Ribosome-recycling factor (186 aa).

The protein belongs to the RRF family.

The protein resides in the cytoplasm. Functionally, responsible for the release of ribosomes from messenger RNA at the termination of protein biosynthesis. May increase the efficiency of translation by recycling ribosomes from one round of translation to another. The protein is Ribosome-recycling factor of Burkholderia cenocepacia (strain HI2424).